The sequence spans 296 residues: Prostate androgen-regulated mucin-like protein 1 homolog (296 aa).

Residues 1–20 form the signal peptide; that stretch reads MVCKVLIALCIFTAGLRVQG. Residues 21–244 are Extracellular-facing; it reads SPTVPLPVSL…EVENALSSGS (224 aa). N61 and N95 each carry an N-linked (GlcNAc...) asparagine glycan. The interval 72 to 220 is disordered; the sequence is LTSQLPTDHR…SPQDTEPGKV (149 aa). The segment covering 78-95 has biased composition (basic and acidic residues); it reads TDHREEAVTSPPLKRDVN. A compositionally biased stretch (polar residues) spans 96–110; sequence STDSSPAGFPSTSSD. A compositionally biased stretch (low complexity) spans 139 to 167; that stretch reads LLSSQAPTSATTSPATSLSESLSASVTSS. Residues 168-177 show a composition bias toward polar residues; sequence HNSTVANIQP. A glycan (N-linked (GlcNAc...) asparagine) is linked at N169. Over residues 206 to 217 the composition is skewed to basic and acidic residues; the sequence is VPKEKSPQDTEP. The helical transmembrane segment at 245–265 threads the bilayer; the sequence is IAAITVTVIAVVLLVFGGAAY. Over 266-296 the chain is Cytoplasmic; it reads LKIRHSSYGRLLDDHDYGSWGNYNNPLYDDS. S284 is subject to Phosphoserine.

Belongs to the PARM family. In terms of processing, highly N-glycosylated and O-glycosylated.

It localises to the cell membrane. The protein localises to the golgi apparatus membrane. The protein resides in the endosome membrane. May regulate TLP1 expression and telomerase activity, thus enabling certain prostatic cells to resist apoptosis. The sequence is that of Prostate androgen-regulated mucin-like protein 1 homolog (Parm1) from Mus musculus (Mouse).